We begin with the raw amino-acid sequence, 546 residues long: uncharacterized protein (546 aa).

Transmembrane regions (helical) follow at residues 106-126, 145-165, 172-192, 231-251, 263-283, 332-352, 375-395, 416-436, 444-464, and 510-530; these read WWIVIQVSVITIVVTFASSVY, TLGSCTFLVGFGVGSLPFAPL, FIIYFVTLLIFTIFQVGGGCA, YVLPGFCTFPYLGPIIGPIIG, WTFWINMIWAAAVIVFVFIFF, LIFTEPIVVCFTLYLTVVYII, GLSFIGVGVGIVCAGLCTPFI, LYPLFIGCFLLPISMFWFAWT, WIVPIIASAFFGFSLLIVFFV, and WATSVLGFISVAMVPIPFIFY.

This sequence belongs to the major facilitator superfamily. CAR1 family.

The protein localises to the endoplasmic reticulum membrane. This is an uncharacterized protein from Schizosaccharomyces pombe (strain 972 / ATCC 24843) (Fission yeast).